A 284-amino-acid chain; its full sequence is Pantothenate synthetase (284 aa).

30–37 (MGNLHNAH) is a binding site for ATP. His-37 acts as the Proton donor in catalysis. Gln-61 contributes to the (R)-pantoate binding site. Gln-61 serves as a coordination point for beta-alanine. 149–152 (GIKD) provides a ligand contact to ATP. Residue Gln-155 participates in (R)-pantoate binding. Residues Val-178 and 186-189 (MSSR) each bind ATP.

The protein belongs to the pantothenate synthetase family. In terms of assembly, homodimer.

It is found in the cytoplasm. It catalyses the reaction (R)-pantoate + beta-alanine + ATP = (R)-pantothenate + AMP + diphosphate + H(+). It functions in the pathway cofactor biosynthesis; (R)-pantothenate biosynthesis; (R)-pantothenate from (R)-pantoate and beta-alanine: step 1/1. Functionally, catalyzes the condensation of pantoate with beta-alanine in an ATP-dependent reaction via a pantoyl-adenylate intermediate. The polypeptide is Pantothenate synthetase (Saccharophagus degradans (strain 2-40 / ATCC 43961 / DSM 17024)).